The chain runs to 276 residues: Shikimate dehydrogenase (NADP(+)) (276 aa).

Shikimate is bound by residues 15–17 (SKS) and threonine 62. The active-site Proton acceptor is the lysine 66. Glutamate 78 lines the NADP(+) pocket. Shikimate-binding residues include asparagine 87 and aspartate 103. NADP(+)-binding positions include 127-131 (GAGGV), 150-155 (NRTHIK), and methionine 214. Tyrosine 216 contributes to the shikimate binding site. Glycine 239 lines the NADP(+) pocket.

Belongs to the shikimate dehydrogenase family. Homodimer.

The enzyme catalyses shikimate + NADP(+) = 3-dehydroshikimate + NADPH + H(+). Its pathway is metabolic intermediate biosynthesis; chorismate biosynthesis; chorismate from D-erythrose 4-phosphate and phosphoenolpyruvate: step 4/7. Functionally, involved in the biosynthesis of the chorismate, which leads to the biosynthesis of aromatic amino acids. Catalyzes the reversible NADPH linked reduction of 3-dehydroshikimate (DHSA) to yield shikimate (SA). The sequence is that of Shikimate dehydrogenase (NADP(+)) from Haemophilus ducreyi (strain 35000HP / ATCC 700724).